We begin with the raw amino-acid sequence, 495 residues long: YTH domain-containing protein ECT3 (495 aa).

The 138-residue stretch at 261–398 folds into the YTH domain; that stretch reads AKFYVIKSYS…EQGIKVIKIF (138 aa). Residues 267 to 269, Asp-273, 283 to 284, Asn-316, Trp-340, Trp-345, and Trp-353 each bind RNA; these read KSY and WS.

Expressed in the shoot apex, at the sites of leaf formation, and in emerging leaves.

The protein localises to the cytoplasm. Specifically recognizes and binds N6-methyladenosine (m6A)-containing RNAs, and regulates mRNA stability. M6A is a modification present at internal sites of mRNAs and some non-coding RNAs and plays a role in mRNA stability and processing. Required for the correct timing of leaf formation and normal leaf morphology. Required for proper trichome branching and morphology. Functions redundantly with ECT2. In Arabidopsis thaliana (Mouse-ear cress), this protein is YTH domain-containing protein ECT3.